The chain runs to 137 residues: MTFNLCVLTPNRIVWDSEVKEIILSTNSGQIGVLQNHAPIATALDIGILRIRLKDRWLTMALMGGFARIGNNEITILVTDAESASDINPQEAQQTLQIAEANLNKAEGKRETIEANLSLRRAKTRVEAIVETIKRIS.

The protein belongs to the ATPase epsilon chain family. In terms of assembly, F-type ATPases have 2 components, CF(1) - the catalytic core - and CF(0) - the membrane proton channel. CF(1) has five subunits: alpha(3), beta(3), gamma(1), delta(1), epsilon(1). CF(0) has three main subunits: a, b and c.

The protein resides in the plastid. The protein localises to the chloroplast thylakoid membrane. Produces ATP from ADP in the presence of a proton gradient across the membrane. The polypeptide is ATP synthase epsilon chain, chloroplastic (Pisum sativum (Garden pea)).